A 446-amino-acid chain; its full sequence is ATP synthase subunit b-delta (446 aa).

The segment at methionine 1–leucine 168 is ATP synthase subunit b. Residues phenylalanine 4–proline 24 form a helical membrane-spanning segment. The ATP synthase subunit delta stretch occupies residues methionine 169–aspartate 446.

This sequence in the N-terminal section; belongs to the ATPase B chain family. The protein in the C-terminal section; belongs to the ATPase delta chain family. In terms of assembly, F-type ATPases have 2 components, F(1) - the catalytic core - and F(0) - the membrane proton channel. F(1) has five subunits: alpha(3), beta(3), gamma(1), delta(1), epsilon(1). F(0) has three main subunits: a(1), b(2) and c(10-14). The alpha and beta chains form an alternating ring which encloses part of the gamma chain. F(1) is attached to F(0) by a central stalk formed by the gamma and epsilon chains, while a peripheral stalk is formed by the delta and b chains.

Its subcellular location is the cell membrane. F(1)F(0) ATP synthase produces ATP from ADP in the presence of a proton or sodium gradient. F-type ATPases consist of two structural domains, F(1) containing the extramembraneous catalytic core and F(0) containing the membrane proton channel, linked together by a central stalk and a peripheral stalk. During catalysis, ATP synthesis in the catalytic domain of F(1) is coupled via a rotary mechanism of the central stalk subunits to proton translocation. In terms of biological role, this fusion protein includes a component of the F(0) channel (subunit b) and of the F(1) subunit (subunit delta). Two copies of subunit b and one of delta together form the peripheral 'stator' stalk which links F(1) to F(0). This Mycobacterium avium (strain 104) protein is ATP synthase subunit b-delta (atpFH).